Here is a 287-residue protein sequence, read N- to C-terminus: Glycine--tRNA ligase alpha subunit (287 aa).

The protein belongs to the class-II aminoacyl-tRNA synthetase family. Tetramer of two alpha and two beta subunits.

It localises to the cytoplasm. It catalyses the reaction tRNA(Gly) + glycine + ATP = glycyl-tRNA(Gly) + AMP + diphosphate. This chain is Glycine--tRNA ligase alpha subunit, found in Campylobacter jejuni subsp. jejuni serotype O:6 (strain 81116 / NCTC 11828).